A 1131-amino-acid polypeptide reads, in one-letter code: Phytochrome (1131 aa).

The interval Met-1 to Lys-30 is disordered. Residues Gln-9 to Asn-29 show a composition bias toward low complexity. The GAF domain maps to Asp-227–Leu-406. Residue Cys-332 coordinates phytochromobilin. PAS domains lie at Val-621–Glu-692 and Asp-755–Leu-826. In terms of domain architecture, Histidine kinase spans Tyr-903–Gln-1123.

Belongs to the phytochrome family. As to quaternary structure, homodimer. In terms of processing, contains one covalently linked phytochromobilin chromophore.

Its function is as follows. Regulatory photoreceptor which exists in two forms that are reversibly interconvertible by light: the Pr form that absorbs maximally in the red region of the spectrum and the Pfr form that absorbs maximally in the far-red region. Photoconversion of Pr to Pfr induces an array of morphogenic responses, whereas reconversion of Pfr to Pr cancels the induction of those responses. Pfr controls the expression of a number of nuclear genes including those encoding the small subunit of ribulose-bisphosphate carboxylase, chlorophyll A/B binding protein, protochlorophyllide reductase, rRNA, etc. It also controls the expression of its own gene(s) in a negative feedback fashion. The polypeptide is Phytochrome (Pinus sylvestris (Scotch pine)).